A 208-amino-acid chain; its full sequence is Imidazoleglycerol-phosphate dehydratase (208 aa).

Belongs to the imidazoleglycerol-phosphate dehydratase family.

The protein localises to the cytoplasm. The catalysed reaction is D-erythro-1-(imidazol-4-yl)glycerol 3-phosphate = 3-(imidazol-4-yl)-2-oxopropyl phosphate + H2O. It participates in amino-acid biosynthesis; L-histidine biosynthesis; L-histidine from 5-phospho-alpha-D-ribose 1-diphosphate: step 6/9. The chain is Imidazoleglycerol-phosphate dehydratase from Symbiobacterium thermophilum (strain DSM 24528 / JCM 14929 / IAM 14863 / T).